Reading from the N-terminus, the 721-residue chain is Peroxisomal fatty acid beta-oxidation multifunctional protein AIM1 (721 aa).

E116 (nucleophile) is an active-site residue. E136 (proton acceptor) is an active-site residue. Residues 719–721 (SKL) carry the Microbody targeting signal motif.

The protein in the N-terminal section; belongs to the enoyl-CoA hydratase/isomerase family. It in the central section; belongs to the 3-hydroxyacyl-CoA dehydrogenase family. As to expression, widely expressed.

The protein localises to the peroxisome. The catalysed reaction is a (3S)-3-hydroxyacyl-CoA = a (2E)-enoyl-CoA + H2O. The enzyme catalyses a 4-saturated-(3S)-3-hydroxyacyl-CoA = a (3E)-enoyl-CoA + H2O. It carries out the reaction (3S)-3-hydroxybutanoyl-CoA = (2E)-butenoyl-CoA + H2O. It catalyses the reaction (3S)-hydroxyoctanoyl-CoA = (2E)-octenoyl-CoA + H2O. The catalysed reaction is (3S)-3-hydroxydodecanoyl-CoA = (2E)-dodecenoyl-CoA + H2O. The enzyme catalyses (3S)-hydroxytetradecanoyl-CoA = (2E)-tetradecenoyl-CoA + H2O. It carries out the reaction (3S)-hydroxyhexanoyl-CoA = (2E)-hexenoyl-CoA + H2O. It catalyses the reaction a (3Z)-enoyl-CoA = a 4-saturated (2E)-enoyl-CoA. The catalysed reaction is a (3E)-enoyl-CoA = a 4-saturated (2E)-enoyl-CoA. The enzyme catalyses (3S)-3-hydroxybutanoyl-CoA = (3R)-3-hydroxybutanoyl-CoA. It carries out the reaction a (3S)-3-hydroxyacyl-CoA + NAD(+) = a 3-oxoacyl-CoA + NADH + H(+). It catalyses the reaction (3S)-3-hydroxybutanoyl-CoA + NAD(+) = acetoacetyl-CoA + NADH + H(+). The catalysed reaction is (3S)-hydroxyhexanoyl-CoA + NAD(+) = 3-oxohexanoyl-CoA + NADH + H(+). The enzyme catalyses (3S)-hydroxyoctanoyl-CoA + NAD(+) = 3-oxooctanoyl-CoA + NADH + H(+). It carries out the reaction (3S)-3-hydroxydodecanoyl-CoA + NAD(+) = 3-oxododecanoyl-CoA + NADH + H(+). It catalyses the reaction (3S)-hydroxytetradecanoyl-CoA + NAD(+) = 3-oxotetradecanoyl-CoA + NADH + H(+). The protein operates within lipid metabolism; fatty acid beta-oxidation. Involved in peroxisomal fatty acid beta-oxidation. Required for wound-induced jasmonate biosynthesis. Possesses enoyl-CoA hydratase activity against short chain substrates (C4-C6) and 3-hydroxyacyl-CoA dehydrogenase activity against chains of variable sizes (C6-C16). Possesses cinnamoyl-CoA hydratase activity and is involved in the peroxisomal beta-oxidation pathway for the biosynthesis of benzoic acid (BA). Required for the accumulation in seeds of benzoylated glucosinolates (BGs) and substituted hydroxybenzoylated choline esters, which are BA-containing secondary metabolites. Required for salicylic acid (SA) in seeds. This is Peroxisomal fatty acid beta-oxidation multifunctional protein AIM1 (AIM1) from Arabidopsis thaliana (Mouse-ear cress).